Reading from the N-terminus, the 212-residue chain is Probable octanoyltransferase (212 aa).

The BPL/LPL catalytic domain maps to 28 to 199 (GVSEEMILVT…NLETLLQRQE (172 aa)). Substrate-binding positions include 66 to 73 (RGGDATYH), 130 to 132 (SVG), and 143 to 145 (GVA). Cysteine 161 serves as the catalytic Acyl-thioester intermediate.

The protein belongs to the LipB family.

It is found in the cytoplasm. It catalyses the reaction octanoyl-[ACP] + L-lysyl-[protein] = N(6)-octanoyl-L-lysyl-[protein] + holo-[ACP] + H(+). It participates in protein modification; protein lipoylation via endogenous pathway; protein N(6)-(lipoyl)lysine from octanoyl-[acyl-carrier-protein]: step 1/2. Catalyzes the transfer of endogenously produced octanoic acid from octanoyl-acyl-carrier-protein onto the lipoyl domains of lipoate-dependent enzymes. Lipoyl-ACP can also act as a substrate although octanoyl-ACP is likely to be the physiological substrate. The sequence is that of Probable octanoyltransferase from Pyrobaculum arsenaticum (strain DSM 13514 / JCM 11321 / PZ6).